The primary structure comprises 409 residues: Mitochondrial import inner membrane translocase subunit TIM50-B (409 aa).

Residues 1 to 42 (MSLIAIERVLCGWPKICRKLIVTSRSLTSGLRRALVKQPRKG) constitute a mitochondrion transit peptide. Residues 43–127 (GDVGKPGMEL…ELERAFRRMK (85 aa)) lie on the Mitochondrial matrix side of the membrane. Residues 93 to 114 (PQTSEESNDEESRERRKLEEEE) form a disordered region. The span at 102-111 (EESRERRKLE) shows a compositional bias: basic and acidic residues. Residues 128–148 (LGFGLFGIGSMLFSFWAIYFY) form a helical membrane-spanning segment. At 149–409 (GRPSLDEHGN…KNWTRGFINH (261 aa)) the chain is on the mitochondrial intermembrane side. Positions 205–348 (YVQPPYTLVL…FELTSFLSVL (144 aa)) constitute an FCP1 homology domain.

The protein belongs to the TIM50 family. As to quaternary structure, component of the TIM23 complex at least composed of Tim23, Tim17 (Tim17a1, Tim17a2 or Tim17b1) and a Tim50. As to expression, exclusively expressed in the testis.

It is found in the mitochondrion inner membrane. Functionally, essential component of the TIM23 complex, a complex that mediates the translocation of transit peptide-containing proteins across the mitochondrial inner membrane. This chain is Mitochondrial import inner membrane translocase subunit TIM50-B (ttm2), found in Drosophila melanogaster (Fruit fly).